We begin with the raw amino-acid sequence, 225 residues long: Ribose-5-phosphate isomerase A (225 aa).

Residues 32 to 35, 85 to 88, and 98 to 101 each bind substrate; these read TGST, DGAD, and KGGG. Glu-107 (proton acceptor) is an active-site residue. Residue Lys-125 coordinates substrate.

It belongs to the ribose 5-phosphate isomerase family. Homodimer.

The enzyme catalyses aldehydo-D-ribose 5-phosphate = D-ribulose 5-phosphate. It functions in the pathway carbohydrate degradation; pentose phosphate pathway; D-ribose 5-phosphate from D-ribulose 5-phosphate (non-oxidative stage): step 1/1. Functionally, catalyzes the reversible conversion of ribose-5-phosphate to ribulose 5-phosphate. This Hahella chejuensis (strain KCTC 2396) protein is Ribose-5-phosphate isomerase A.